The primary structure comprises 329 residues: tRNA N6-adenosine threonylcarbamoyltransferase (329 aa).

The Fe cation site is built by H110 and H114. Residues 132 to 136, D165, G178, and N271 each bind substrate; that span reads VISGG. Fe cation is bound at residue D299.

This sequence belongs to the KAE1 / TsaD family. The cofactor is Fe(2+).

Its subcellular location is the cytoplasm. The enzyme catalyses L-threonylcarbamoyladenylate + adenosine(37) in tRNA = N(6)-L-threonylcarbamoyladenosine(37) in tRNA + AMP + H(+). In terms of biological role, required for the formation of a threonylcarbamoyl group on adenosine at position 37 (t(6)A37) in tRNAs that read codons beginning with adenine. Is involved in the transfer of the threonylcarbamoyl moiety of threonylcarbamoyl-AMP (TC-AMP) to the N6 group of A37, together with TsaE and TsaB. TsaD likely plays a direct catalytic role in this reaction. The sequence is that of tRNA N6-adenosine threonylcarbamoyltransferase from Neorickettsia sennetsu (strain ATCC VR-367 / Miyayama) (Ehrlichia sennetsu).